Reading from the N-terminus, the 173-residue chain is CKLF-like MARVEL transmembrane domain-containing protein 8 (173 aa).

In terms of domain architecture, MARVEL spans 36-168 (FLRTLPGFLI…NTYFSFIAWR (133 aa)). 4 helical membrane passes run 40–60 (LPGF…TLIA), 70–90 (FGWV…FLII), 105–125 (TTVG…AAVV), and 147–167 (FFAF…FIAW).

This sequence belongs to the chemokine-like factor family. As to expression, highly expressed in liver and pancreas.

The protein resides in the membrane. Its subcellular location is the cytoplasm. It localises to the nucleus. This chain is CKLF-like MARVEL transmembrane domain-containing protein 8 (CMTM8), found in Homo sapiens (Human).